The chain runs to 367 residues: Palmitoyltransferase ZDHHC2 (367 aa).

The Cytoplasmic portion of the chain corresponds to 1 to 16 (MAPSGPGSSARRRCRR). The chain crosses the membrane as a helical span at residues 17–37 (VLYWIPVVFITLLLGWSYYAY). The Lumenal portion of the chain corresponds to 38-54 (AIQLCIVSMENTGEQVV). The helical transmembrane segment at 55–75 (CLMAYHLLFAMFVWSYWKTIF) threads the bilayer. The Cytoplasmic portion of the chain corresponds to 76-170 (TLPMNPSKEF…NNCVGFSNYK (95 aa)). In terms of domain architecture, DHHC spans 127 to 177 (RYCDRCQLIKPDRCHHCSVCDKCILKMDHHCPWVNNCVGFSNYKFFLLFLA). The active-site S-palmitoyl cysteine intermediate is Cys-157. Residues 171 to 191 (FFLLFLAYSLLYCLFIAATDL) form a helical membrane-spanning segment. At 192–208 (QYFIKFWTNGLPDTQAK) the chain is on the lumenal side. A helical membrane pass occupies residues 209–229 (FHIMFLFFAAAMFSVSLSSLF). The Cytoplasmic segment spans residues 230 to 367 (GYHCWLVSKN…NPALTMENET (138 aa)). Residues 299–367 (NQDPEQASTP…NPALTMENET (69 aa)) are mediates localization to plasma membrane and recycling endosomes. Positions 330–367 (ESQSHLLTDSQSWTESSINPGKCKAGMSNPALTMENET) are disordered. Polar residues predominate over residues 333–348 (SHLLTDSQSWTESSIN). A Non-canonical dileucine endocytic signal motif is present at residues 335–336 (LL). Position 341 is a phosphoserine (Ser-341). Positions 358-361 (NPAL) match the NPxY-like endocytic signal motif.

It belongs to the DHHC palmitoyltransferase family. Monomer. Homodimer. The monomeric form has a higher catalytic activity. Post-translationally, autopalmitoylated. As to expression, ubiquitously expressed. Reduced expression in colorectal cancers with liver metastasis.

It is found in the postsynaptic density. It localises to the postsynaptic recycling endosome membrane. Its subcellular location is the cell membrane. The protein localises to the endoplasmic reticulum membrane. The protein resides in the golgi apparatus membrane. It carries out the reaction L-cysteinyl-[protein] + hexadecanoyl-CoA = S-hexadecanoyl-L-cysteinyl-[protein] + CoA. The enzyme catalyses L-cysteinyl-[protein] + tetradecanoyl-CoA = S-tetradecanoyl-L-cysteinyl-[protein] + CoA. It catalyses the reaction L-cysteinyl-[protein] + octadecanoyl-CoA = S-octadecanoyl-L-cysteinyl-[protein] + CoA. In terms of biological role, palmitoyltransferase that catalyzes the addition of palmitate onto various protein substrates and is involved in a variety of cellular processes. Has no stringent fatty acid selectivity and in addition to palmitate can also transfer onto target proteins myristate from tetradecanoyl-CoA and stearate from octadecanoyl-CoA. In the nervous system, plays a role in long term synaptic potentiation by palmitoylating AKAP5 through which it regulates protein trafficking from the dendritic recycling endosomes to the plasma membrane and controls both structural and functional plasticity at excitatory synapses. In dendrites, mediates the palmitoylation of DLG4 when synaptic activity decreases and induces synaptic clustering of DLG4 and associated AMPA-type glutamate receptors. Also mediates the de novo and turnover palmitoylation of RGS7BP, a shuttle for Gi/o-specific GTPase-activating proteins/GAPs, promoting its localization to the plasma membrane in response to the activation of G protein-coupled receptors. Through the localization of these GTPase-activating proteins/GAPs, it also probably plays a role in G protein-coupled receptors signaling in neurons. Also probably plays a role in cell adhesion by palmitoylating CD9 and CD151 to regulate their expression and function. Palmitoylates the endoplasmic reticulum protein CKAP4 and regulates its localization to the plasma membrane. Could also palmitoylate LCK and regulate its localization to the plasma membrane. Its function is as follows. (Microbial infection) Promotes Chikungunya virus (CHIKV) replication by mediating viral nsp1 palmitoylation. The sequence is that of Palmitoyltransferase ZDHHC2 from Homo sapiens (Human).